A 209-amino-acid chain; its full sequence is ATP-dependent Clp protease proteolytic subunit (209 aa).

The Nucleophile role is filled by Ser106. Residue His131 is part of the active site.

Belongs to the peptidase S14 family. In terms of assembly, fourteen ClpP subunits assemble into 2 heptameric rings which stack back to back to give a disk-like structure with a central cavity, resembling the structure of eukaryotic proteasomes.

The protein localises to the cytoplasm. It carries out the reaction Hydrolysis of proteins to small peptides in the presence of ATP and magnesium. alpha-casein is the usual test substrate. In the absence of ATP, only oligopeptides shorter than five residues are hydrolyzed (such as succinyl-Leu-Tyr-|-NHMec, and Leu-Tyr-Leu-|-Tyr-Trp, in which cleavage of the -Tyr-|-Leu- and -Tyr-|-Trp bonds also occurs).. Cleaves peptides in various proteins in a process that requires ATP hydrolysis. Has a chymotrypsin-like activity. Plays a major role in the degradation of misfolded proteins. The protein is ATP-dependent Clp protease proteolytic subunit of Brucella canis (strain ATCC 23365 / NCTC 10854 / RM-666).